Consider the following 63-residue polypeptide: Large ribosomal subunit protein bL28 (63 aa).

This sequence belongs to the bacterial ribosomal protein bL28 family.

The chain is Large ribosomal subunit protein bL28 from Brachyspira hyodysenteriae (strain ATCC 49526 / WA1).